The primary structure comprises 191 residues: Neuronal calcium sensor 1 (191 aa).

G2 carries the N-myristoyl glycine lipid modification. 4 EF-hand domains span residues 24-59, 60-95, 96-131, and 144-179; these read ESEI…FPFG, DPSK…TSRG, TVEE…IYRM, and TPEK…DPTI. D73, N75, D77, E84, D109, D111, D113, Y115, E120, D157, N159, D161, Q163, and E168 together coordinate Ca(2+).

Belongs to the recoverin family.

Its subcellular location is the perikaryon. The protein resides in the cell projection. It localises to the growth cone. Functionally, neuronal calcium sensor, regulator of G protein-coupled receptor phosphorylation in a calcium dependent manner. Regulates neurite extension and branching by activity-dependent Ca(2+) influx in growth cones. The protein is Neuronal calcium sensor 1 of Lymnaea stagnalis (Great pond snail).